A 496-amino-acid chain; its full sequence is MKVLQFNQDATCCVVAASSHQISIFNCDPFGKCFEIDTKNSKKKTSNNNGTASNSESRNNEESILITNGSRDRTDAEEEEDNEDNALVTGNILKEGEFVIEMLFSTSLIAIADRGQGLNKGKKLKIVNTKRKSTICEIVFPHEIVDVVMNRKRMCVLLESDQIFIYDISCMKPLETIDLWEDHYKRSQANSFSNASNTGTLEGDSANLNRVATNLLANATQKSVNGSNPSVRTRRNSLRSKIRPRMVLSNDDRSILCFTAYSSPKKNKPNSEALYDVVIYDTLNVTPVNYLNSVHKGNVACLAVSHDGKLLATASDKGTIIRVFHTGVDSDYMSSRSLFKEFRRGTRLCNLYQLAFDKSMTMIGCVGDTDTIHLFKLDDASNSLPGDNSSNGHWNEEEDILASNSNPSMGTPKEIPLSKPRIANYFSKKIKSSIPNQNLSRNFAYITVNESNRSCLGFPDEFPNQVYIASDDGTFSIYSIPSKPGECVLTKNNKFT.

The stretch at 1–35 (MKVLQFNQDATCCVVAASSHQISIFNCDPFGKCFE) is one WD 1 repeat. Residues 41–86 (SKKKTSNNNGTASNSESRNNEESILITNGSRDRTDAEEEEDNEDNA) form a disordered region. Residues 46 to 57 (SNNNGTASNSES) show a composition bias toward low complexity. Over residues 75-84 (DAEEEEDNED) the composition is skewed to acidic residues. A WD 2 repeat occupies 148-190 (VMNRKRMCVLLESDQIFIYDISCMKPLETIDLWEDHYKRSQAN). Residue T213 is modified to Phosphothreonine. S237 is subject to Phosphoserine. WD repeat units follow at residues 294–334 (VHKG…DYMS), 346–385 (TRLCNLYQLAFDKSMTMIGCVGDTDTIHLFKLDDASNSLP), and 448–488 (VNES…GECV). Residues 342–346 (FRRGT) carry the L/FRRG motif motif.

This sequence belongs to the WD repeat PROPPIN family.

It is found in the cytoplasm. The protein resides in the vacuole membrane. In terms of biological role, required for cytoplasm to vacuole transport (Cvt) vesicles formation and mitophagy. Involved in binding of phosphatidylethanolamine to ATG8 and in recruitment of ATG8 and ATG5 to the pre-autophagosomal structure. Protects ATG8 from ARG4-mediated cleavage. Essential for maturation of proaminopeptidase I. The sequence is that of Autophagy-related protein 21 (ATG21) from Saccharomyces cerevisiae (strain YJM789) (Baker's yeast).